The chain runs to 201 residues: Small ribosomal subunit protein uS4c (201 aa).

Residues 20 to 43 form a disordered region; the sequence is GLTSKRPRAGSDLRNQSRSGKRSQ. Positions 89 to 149 constitute an S4 RNA-binding domain; the sequence is MRLDNILFRL…NEQKSRALIQ (61 aa).

It belongs to the universal ribosomal protein uS4 family. As to quaternary structure, part of the 30S ribosomal subunit. Contacts protein S5. The interaction surface between S4 and S5 is involved in control of translational fidelity.

It localises to the plastid. Its subcellular location is the chloroplast. One of the primary rRNA binding proteins, it binds directly to 16S rRNA where it nucleates assembly of the body of the 30S subunit. Its function is as follows. With S5 and S12 plays an important role in translational accuracy. The sequence is that of Small ribosomal subunit protein uS4c (rps4) from Vitis vinifera (Grape).